The primary structure comprises 211 residues: ATP phosphoribosyltransferase (211 aa).

The protein belongs to the ATP phosphoribosyltransferase family. Short subfamily. In terms of assembly, heteromultimer composed of HisG and HisZ subunits.

The protein resides in the cytoplasm. It carries out the reaction 1-(5-phospho-beta-D-ribosyl)-ATP + diphosphate = 5-phospho-alpha-D-ribose 1-diphosphate + ATP. It functions in the pathway amino-acid biosynthesis; L-histidine biosynthesis; L-histidine from 5-phospho-alpha-D-ribose 1-diphosphate: step 1/9. In terms of biological role, catalyzes the condensation of ATP and 5-phosphoribose 1-diphosphate to form N'-(5'-phosphoribosyl)-ATP (PR-ATP). Has a crucial role in the pathway because the rate of histidine biosynthesis seems to be controlled primarily by regulation of HisG enzymatic activity. The chain is ATP phosphoribosyltransferase (hisG) from Pseudomonas aeruginosa (strain ATCC 15692 / DSM 22644 / CIP 104116 / JCM 14847 / LMG 12228 / 1C / PRS 101 / PAO1).